The primary structure comprises 323 residues: D-specific alpha-keto acid dehydrogenase (323 aa).

NAD(+) contacts are provided by residues 157–158 (HI), 230–232 (TGR), and aspartate 256. Arginine 232 is a catalytic residue. Glutamate 261 is an active-site residue. The active-site Proton donor is histidine 293. 293 to 296 (HTAY) lines the NAD(+) pocket.

This sequence belongs to the D-isomer specific 2-hydroxyacid dehydrogenase family.

Its function is as follows. Required for high-level resistance to glycopeptides antibiotics. Catalyzes the reduction of 2-keto acids to 2-D-hydroxy acids that give rise to peptidoglycan precursors that terminate in the depsipeptide D-alanine-2-lactate rather than the dipeptide D-alanine-D-alanine thus preventing vancomycin binding. This is D-specific alpha-keto acid dehydrogenase (vanHB) from Enterococcus faecalis (strain ATCC 700802 / V583).